We begin with the raw amino-acid sequence, 191 residues long: MAKYEIMLMVSGQLNQNQAQAVNDELKAVFGKTEITEEYLGQKTLEYPIKKEVTAHYFNLFLTSDGKSVHEYKRLASIRTDVLRILILNTEKEFGYRASQNAKKVALAKQKQARYNDIMKQVQENGYFQIKGSKRNSRVEKAGAKEVWMLREKFGEDLPEQKIPVLRKVNLTRKPTPNKSSENKQKVEKQA.

Residues 168 to 191 (KVNLTRKPTPNKSSENKQKVEKQA) are disordered. Positions 181 to 191 (SENKQKVEKQA) are enriched in basic and acidic residues.

This sequence belongs to the bacterial ribosomal protein bS6 family.

Functionally, binds together with bS18 to 16S ribosomal RNA. In Mycoplasmoides gallisepticum (strain R(low / passage 15 / clone 2)) (Mycoplasma gallisepticum), this protein is Small ribosomal subunit protein bS6.